Here is a 408-residue protein sequence, read N- to C-terminus: Glutamate N-acetyltransferase (408 aa).

The substrate site is built by T150, K176, T189, E271, N403, and T408. T189 acts as the Nucleophile in catalysis.

It belongs to the ArgJ family. In terms of assembly, heterotetramer of two alpha and two beta chains.

It is found in the cytoplasm. The enzyme catalyses N(2)-acetyl-L-ornithine + L-glutamate = N-acetyl-L-glutamate + L-ornithine. The protein operates within amino-acid biosynthesis; L-arginine biosynthesis; L-ornithine and N-acetyl-L-glutamate from L-glutamate and N(2)-acetyl-L-ornithine (cyclic): step 1/1. Catalyzes the transfer of the acetyl group from N(2)-acetylornithine to glutamate, forming N-acetylglutamate and L-ornithine. The chain is Glutamate N-acetyltransferase from Methanococcus maripaludis (strain C7 / ATCC BAA-1331).